We begin with the raw amino-acid sequence, 8922 residues long: Protein clarinet (8922 aa).

The disordered stretch occupies residues 11–35 (SKGPPLEEVREESEEDAQVPEQVVS). The segment covering 19–28 (VREESEEDAQ) has biased composition (acidic residues). The stretch at 385 to 405 (KDETKLILKSVEDKLETTEIE) forms a coiled coil. Disordered stretches follow at residues 527-579 (QEAA…EPEL), 622-673 (IVIS…EPEL), 687-860 (LAEK…KEPE), 880-955 (SFEQ…EPEL), 971-1049 (EQSS…EPEL), 1062-1139 (SSAE…MESR), 1151-1331 (IARI…EPEL), 1347-1420 (EQSS…VMES), 1444-1520 (SFEQ…PELT), 1538-1619 (SFEQ…EEID), 1632-1710 (SFEQ…LTQE), 1726-1801 (SFEQ…VPEL), 1820-1898 (SFEQ…LTQE), 1939-1992 (VISE…LTQE), 2032-2084 (IVIS…SELT), 2126-2175 (IVIS…SKEP), 2194-2213 (QSSF…PVRL), 2220-2246 (IVIS…YDQD), 2329-2403 (SFEQ…KKPE), 2423-2497 (SFEQ…KPEL), 2516-2594 (SFEQ…LTQE), 2610-2684 (SFEQ…KEPE), 2704-2845 (SFEQ…ERPF), 2892-2963 (SFEQ…MESK), 2983-3155 (EQSS…EPEL), 3171-3249 (EQSS…EPEL), 3268-3337 (SFEQ…PVML), 3619-3639 (SITP…PTTD), 3995-4079 (AEPV…QEEI), 4117-4169 (IVIS…PELT), 4181-4271 (SLAE…STTI), 4557-4624 (QASA…TQEE), 4636-4656 (EQSS…PVRL), 4666-4685 (SEQH…YERS), 4730-4801 (EQSS…GVTQ), 4855-4899 (PANP…PLQD), 5004-5036 (PEDF…NGLT), 5360-5379 (LAMF…RKES), 5390-5413 (RRSS…DTAL), 5484-5511 (KKQI…ENEV), 5540-5572 (PPIA…SQFG), 6194-6303 (AEPV…ESES), 6354-6437 (DVES…GSRM), 6487-6510 (SSKS…QIGI), 6577-6609 (ARFP…LDDL), 6668-6691 (NAET…SVAR), 6728-6768 (AEFE…VPPG), 6998-7018 (TERK…TSTS), 7045-7098 (ARSR…DDFD), 7137-7175 (FDGD…FEKP), 7202-7263 (EAPS…YPDR), 7313-7350 (KTTT…EIEE), 7598-7623 (DSVR…SPGM), 7760-7797 (TRRH…SRPT), and 7842-7881 (HIRQ…SSSV). Positions 531–552 (SDNHEKERSSATSKADYERSFD) are enriched in basic and acidic residues. Residues 760-776 (MESKEPELTQEEIDHIA) are compositionally biased toward basic and acidic residues. Residues 1062 to 1076 (SSAEQSSFEQASTVP) show a composition bias toward low complexity. Basic and acidic residues predominate over residues 1230 to 1244 (MESKEPELTQEEIDH). The segment covering 1251 to 1261 (IAEQSSFEQAS) has biased composition (polar residues). Basic and acidic residues-rich tracts occupy residues 1606–1619 (MESK…EEID) and 1700–1710 (MESKEPELTQE). Composition is skewed to basic and acidic residues over residues 1888 to 1898 (MESKEPELTQE) and 1982 to 1992 (MESKESELTQE). Polar residues predominate over residues 2194–2204 (QSSFEQASTIT). The span at 2584-2594 (MESKEPELTQE) shows a compositional bias: basic and acidic residues. Basic and acidic residues predominate over residues 2772–2788 (MESKEPELTQEEIDHIA). Residues 2793 to 2803 (LAEQSSFEQAS) show a composition bias toward polar residues. Residues 3076 to 3085 (APSSSFEQAS) are compositionally biased toward polar residues. Residues 4035–4044 (GTSFPDNAET) are compositionally biased toward polar residues. Over residues 4065-4079 (PVMKSKEPELTQEEI) the composition is skewed to basic and acidic residues. Composition is skewed to polar residues over residues 4182 to 4195 (LAEQ…STIP), 4223 to 4234 (SATSGADYQQSF), and 4255 to 4271 (MEST…STTI). Basic and acidic residues predominate over residues 4571–4580 (IVEKREDDKS). Over residues 4581–4594 (NITSGADYQQSFDQ) the composition is skewed to polar residues. The segment covering 4613-4624 (MESKEPELTQEE) has biased composition (basic and acidic residues). Polar residues predominate over residues 4636–4645 (EQSSFEQAST). Residues 4730 to 4739 (EQSSFEQAST) are compositionally biased toward polar residues. Positions 4871-4890 (EGSSSATSGADIPSSFDISS) are enriched in low complexity. Over residues 5009–5023 (EATSGADTESISETT) the composition is skewed to polar residues. Positions 5390-5407 (RRSSGADSRASNDSSASR) are enriched in low complexity. Residues 5486-5499 (QISSRTESTNSRVS) show a composition bias toward polar residues. The segment covering 5540-5550 (PPIAISHPTPP) has biased composition (pro residues). Low complexity predominate over residues 5560-5572 (RHSSGSSAHSQFG). 2 stretches are compositionally biased toward polar residues: residues 6225-6245 (ASSG…TSGF) and 6270-6284 (KTVS…MASR). Basic and acidic residues-rich tracts occupy residues 6285-6303 (KSSE…ESES) and 6376-6422 (GEGE…EESL). Residues 6494 to 6505 (LGTSAPTKSIPS) show a composition bias toward polar residues. A compositionally biased stretch (low complexity) spans 6590-6600 (SPSVMSSSIMS). Residues 6670 to 6687 (ETDSSSSVITSRQPSRSP) show a composition bias toward polar residues. The segment covering 6735–6747 (SQVPSRQPSRSPS) has biased composition (low complexity). Composition is skewed to basic and acidic residues over residues 6998–7008 (TERKQREESPT) and 7045–7069 (ARSR…HTPE). The segment covering 7071–7086 (SSTAVVTDVPSVSPVT) has biased composition (low complexity). Residues 7155-7175 (TTKKTSDFDFPKETDEVFEKP) are compositionally biased toward basic and acidic residues. Positions 7248-7260 (SDEESCSEDDEEY) are enriched in acidic residues. Low complexity predominate over residues 7313 to 7331 (KTTTSQTPSTSTKPTVTAP). Residues 7599–7609 (SVRDDNERNEN) show a composition bias toward basic and acidic residues. Composition is skewed to low complexity over residues 7777–7788 (SSASRPPSAAGS) and 7854–7880 (AQTG…GSSS). Positions 7895–7915 (KKELKDVLIQRKQRLEATEIE) form a coiled coil. Positions 8510-8562 (SRRRAQETALTSSNKISTGSRSYARRPIRPSSYRNPEATNSMPDRHVARRTAE) are disordered. Composition is skewed to polar residues over residues 8517–8530 (TALT…TGSR) and 8541–8551 (SYRNPEATNSM). Basic and acidic residues predominate over residues 8552 to 8562 (PDRHVARRTAE). One can recognise a PDZ domain in the interval 8570–8661 (RILLTRSYKH…EIEMVIRTYK (92 aa)). The region spanning 8714–8835 (CHGHIQVSLG…SAINTGPRWY (122 aa)) is the C2 domain.

As to expression, expressed in the nervous system.

The protein resides in the synapse. It localises to the cell projection. The protein localises to the axon. Its function is as follows. Required for synapse development in the active zone of presynaptic terminals of specific neurons including serotonergic NSM neurons. The active zone is a protein-dense neuronal region within the presynaptic bouton, from which synaptic vesicles send neurotransmitter signals across the synapse. Plays a role in the recruitment and clustering of synaptic vesicles in the active zone of presynaptic terminals in serotonergic NSM neurons, and coordinates the release of synaptic vesicles at presynaptic terminals to regulate neurotransmission at neuromuscular junctions. Regulates synapse number in inhibitory motor neurons and plays a role in spontaneous postsynaptic synaptic vesicle release in muscle cells. In Caenorhabditis elegans, this protein is Protein clarinet.